The sequence spans 415 residues: Serine hydroxymethyltransferase (415 aa).

(6S)-5,6,7,8-tetrahydrofolate is bound by residues L122 and 126–128 (GHL). The residue at position 230 (K230) is an N6-(pyridoxal phosphate)lysine.

It belongs to the SHMT family. As to quaternary structure, homodimer. Requires pyridoxal 5'-phosphate as cofactor.

The protein resides in the cytoplasm. It carries out the reaction (6R)-5,10-methylene-5,6,7,8-tetrahydrofolate + glycine + H2O = (6S)-5,6,7,8-tetrahydrofolate + L-serine. The protein operates within one-carbon metabolism; tetrahydrofolate interconversion. Its pathway is amino-acid biosynthesis; glycine biosynthesis; glycine from L-serine: step 1/1. Functionally, catalyzes the reversible interconversion of serine and glycine with tetrahydrofolate (THF) serving as the one-carbon carrier. This reaction serves as the major source of one-carbon groups required for the biosynthesis of purines, thymidylate, methionine, and other important biomolecules. Also exhibits THF-independent aldolase activity toward beta-hydroxyamino acids, producing glycine and aldehydes, via a retro-aldol mechanism. The sequence is that of Serine hydroxymethyltransferase from Cupriavidus taiwanensis (strain DSM 17343 / BCRC 17206 / CCUG 44338 / CIP 107171 / LMG 19424 / R1) (Ralstonia taiwanensis (strain LMG 19424)).